The chain runs to 96 residues: Glutamyl-tRNA(Gln) amidotransferase subunit C (96 aa).

The protein belongs to the GatC family. Heterotrimer of A, B and C subunits.

It carries out the reaction L-glutamyl-tRNA(Gln) + L-glutamine + ATP + H2O = L-glutaminyl-tRNA(Gln) + L-glutamate + ADP + phosphate + H(+). The enzyme catalyses L-aspartyl-tRNA(Asn) + L-glutamine + ATP + H2O = L-asparaginyl-tRNA(Asn) + L-glutamate + ADP + phosphate + 2 H(+). Allows the formation of correctly charged Asn-tRNA(Asn) or Gln-tRNA(Gln) through the transamidation of misacylated Asp-tRNA(Asn) or Glu-tRNA(Gln) in organisms which lack either or both of asparaginyl-tRNA or glutaminyl-tRNA synthetases. The reaction takes place in the presence of glutamine and ATP through an activated phospho-Asp-tRNA(Asn) or phospho-Glu-tRNA(Gln). The polypeptide is Glutamyl-tRNA(Gln) amidotransferase subunit C (Neisseria meningitidis serogroup B (strain ATCC BAA-335 / MC58)).